Here is a 531-residue protein sequence, read N- to C-terminus: Probable calcium-binding mitochondrial carrier F17E5.2 (531 aa).

EF-hand domains are found at residues 70 to 105 (EKEK…QAHI), 106 to 135 (PASV…NYVI), 136 to 171 (AHEA…MGVN), and 172 to 207 (LDDQ…YPST). 5 residues coordinate Ca(2+): Asp-83, Asp-85, Asp-87, Ser-89, and Asp-94. Asp-149, Asn-151, Asp-153, Glu-155, and Glu-160 together coordinate Ca(2+). Solcar repeat units follow at residues 242–328 (GVWW…IKRW), 338–424 (LSTI…LKSM), and 435–525 (PGVL…VRKQ). The next 6 membrane-spanning stretches (helical) occupy residues 248 to 265 (LVAG…TAPF), 303 to 322 (GNGI…FMCY), 348 to 361 (SSAG…IYPM), 399 to 418 (GYLP…LTVY), 441 to 458 (LACG…SYPL), and 500 to 517 (GITP…ISYV).

It belongs to the mitochondrial carrier (TC 2.A.29) family.

Its subcellular location is the mitochondrion inner membrane. Its function is as follows. Calcium-dependent mitochondrial solute carrier. This is Probable calcium-binding mitochondrial carrier F17E5.2 from Caenorhabditis elegans.